A 185-amino-acid chain; its full sequence is Hypoxanthine/guanine phosphoribosyltransferase (185 aa).

This sequence belongs to the purine/pyrimidine phosphoribosyltransferase family. Archaeal HPRT subfamily. Homodimer.

It is found in the cytoplasm. The catalysed reaction is IMP + diphosphate = hypoxanthine + 5-phospho-alpha-D-ribose 1-diphosphate. The enzyme catalyses GMP + diphosphate = guanine + 5-phospho-alpha-D-ribose 1-diphosphate. It functions in the pathway purine metabolism; IMP biosynthesis via salvage pathway; IMP from hypoxanthine: step 1/1. Functionally, catalyzes a salvage reaction resulting in the formation of IMP that is energically less costly than de novo synthesis. The sequence is that of Hypoxanthine/guanine phosphoribosyltransferase from Methanococcus maripaludis (strain C6 / ATCC BAA-1332).